The primary structure comprises 146 residues: uncharacterized protein (146 aa).

A run of 2 helical transmembrane segments spans residues A89 to Y111 and I121 to V143.

The protein localises to the cell membrane. This is an uncharacterized protein from Archaeoglobus fulgidus (strain ATCC 49558 / DSM 4304 / JCM 9628 / NBRC 100126 / VC-16).